The primary structure comprises 526 residues: Catalase (526 aa).

Residues 1–22 (MADDREKSTDQMKLWKEGRGSQ) are compositionally biased toward basic and acidic residues. The tract at residues 1–29 (MADDREKSTDQMKLWKEGRGSQRPDVLTT) is disordered. Active-site residues include His75 and Asn148. His194, Ser201, Arg203, Asn213, Lys237, Trp303, His305, and Lys306 together coordinate NADP(+). Tyr358 provides a ligand contact to heme.

The protein belongs to the catalase family. Homotetramer. Requires heme as cofactor. The cofactor is NADP(+).

The protein localises to the peroxisome matrix. The enzyme catalyses 2 H2O2 = O2 + 2 H2O. Catalyzes the degradation of hydrogen peroxide (H(2)O(2)) generated by peroxisomal oxidases to water and oxygen, thereby protecting cells from the toxic effects of hydrogen peroxide. This is Catalase (cat) from Danio rerio (Zebrafish).